Here is a 366-residue protein sequence, read N- to C-terminus: D-alanine--D-alanine ligase (366 aa).

An ATP-grasp domain is found at lysine 150–valine 353. Residue isoleucine 180–glutamate 235 participates in ATP binding. 3 residues coordinate Mg(2+): aspartate 307, glutamate 320, and asparagine 322.

The protein belongs to the D-alanine--D-alanine ligase family. The cofactor is Mg(2+). It depends on Mn(2+) as a cofactor.

It localises to the cytoplasm. It carries out the reaction 2 D-alanine + ATP = D-alanyl-D-alanine + ADP + phosphate + H(+). Its pathway is cell wall biogenesis; peptidoglycan biosynthesis. Cell wall formation. The sequence is that of D-alanine--D-alanine ligase from Sodalis glossinidius (strain morsitans).